Here is a 469-residue protein sequence, read N- to C-terminus: Putative dipeptidase SH1171 (469 aa).

Residue His-84 participates in Zn(2+) binding. The active site involves Asp-86. Residue Asp-115 participates in Zn(2+) binding. The active-site Proton acceptor is Glu-149. The Zn(2+) site is built by Glu-150, Asp-173, and His-440.

The protein belongs to the peptidase M20A family. Zn(2+) serves as cofactor.

This Staphylococcus haemolyticus (strain JCSC1435) protein is Putative dipeptidase SH1171.